We begin with the raw amino-acid sequence, 201 residues long: GTP cyclohydrolase 1 (201 aa).

Zn(2+)-binding residues include cysteine 90, histidine 93, and cysteine 163.

It belongs to the GTP cyclohydrolase I family. In terms of assembly, toroid-shaped homodecamer, composed of two pentamers of five dimers.

It carries out the reaction GTP + H2O = 7,8-dihydroneopterin 3'-triphosphate + formate + H(+). The protein operates within cofactor biosynthesis; 7,8-dihydroneopterin triphosphate biosynthesis; 7,8-dihydroneopterin triphosphate from GTP: step 1/1. The chain is GTP cyclohydrolase 1 (folE) from Streptomyces coelicolor (strain ATCC BAA-471 / A3(2) / M145).